The sequence spans 350 residues: Fe(2+) transport protein 2 (350 aa).

Residues 1-21 form the signal peptide; the sequence is MATTKLVYILLILFTFTVSPA. Topologically, residues 22–47 are extracellular; sequence ISTAPEHCDSGFDNPCINKAKALPLK. Residues 48-68 form a helical membrane-spanning segment; that stretch reads IVAIVAILTTSLIGVTSPLFS. At 69 to 80 the chain is on the cytoplasmic side; it reads RYISFLRPDGNG. The chain crosses the membrane as a helical span at residues 81 to 101; it reads FMIVKCFSSGIILGTGFMHVL. Topologically, residues 102–120 are extracellular; sequence PDSFEMLSSKCLSDNPWHK. A helical transmembrane segment spans residues 121–141; the sequence is FPFAGFVAMMSGLVTLAIDSI. At 142–195 the chain is on the cytoplasmic side; sequence TTSLYTGKNSVGPVPDEEYGIDQEKAIHMVGHNHSHGHGVVLATKDDGQLLRYQ. A helical membrane pass occupies residues 196-216; it reads VIAMVLEVGILFHSVVIGLSL. The Extracellular segment spans residues 217-227; that stretch reads GATNDSCTIKG. A helical membrane pass occupies residues 228-248; the sequence is LIIALCFHHLFEGIGLGGCIL. Over 249 to 257 the chain is Cytoplasmic; that stretch reads QADFTNVKK. The chain crosses the membrane as a helical span at residues 258 to 278; that stretch reads FLMAFFFTGTTPCGIFLGIAL. Residues 279 to 289 lie on the Extracellular side of the membrane; that stretch reads SSIYRDNSPTA. Residues 290–310 traverse the membrane as a helical segment; sequence LITIGLLNACSAGMLIYMALV. Residues 311-329 are Cytoplasmic-facing; the sequence is DLLATEFMGSMLQGSIKLQ. A helical transmembrane segment spans residues 330–350; sequence IKCFTAALLGCAVMSVVAVWA.

This sequence belongs to the ZIP transporter (TC 2.A.5) family. In terms of tissue distribution, expressed in the external cell layers of the root subapical zone.

The protein resides in the cell membrane. In terms of biological role, high-affinity iron transporter that mediates under iron-deficiency the iron uptake from the rhizosphere across the plasma membrane in the root epidermal layer. Could also be capable of transporting zinc ions. This is Fe(2+) transport protein 2 (IRT2) from Arabidopsis thaliana (Mouse-ear cress).